Reading from the N-terminus, the 181-residue chain is Peptidyl-prolyl cis-trans isomerase H (181 aa).

The PPIase cyclophilin-type domain occupies Phe-17–Glu-180.

This sequence belongs to the cyclophilin-type PPIase family. PPIase H subfamily.

It is found in the nucleus. The enzyme catalyses [protein]-peptidylproline (omega=180) = [protein]-peptidylproline (omega=0). PPIases accelerate the folding of proteins. It catalyzes the cis-trans isomerization of proline imidic peptide bonds in oligopeptides. In Aspergillus fumigatus (strain ATCC MYA-4609 / CBS 101355 / FGSC A1100 / Af293) (Neosartorya fumigata), this protein is Peptidyl-prolyl cis-trans isomerase H (cyp3).